Consider the following 397-residue polypeptide: LL-diaminopimelate aminotransferase (397 aa).

Substrate is bound by residues Tyr14 and Gly41. Residues Tyr71, 104-105, Tyr128, Asn174, Tyr205, and 233-235 contribute to the pyridoxal 5'-phosphate site; these read AK and SFS. Lys105, Tyr128, and Asn174 together coordinate substrate. Residue Lys236 is modified to N6-(pyridoxal phosphate)lysine. Residues Arg244 and Asn275 each coordinate pyridoxal 5'-phosphate. Residues Asn275 and Arg368 each coordinate substrate.

The protein belongs to the class-I pyridoxal-phosphate-dependent aminotransferase family. LL-diaminopimelate aminotransferase subfamily. In terms of assembly, homodimer. Pyridoxal 5'-phosphate is required as a cofactor.

It carries out the reaction (2S,6S)-2,6-diaminopimelate + 2-oxoglutarate = (S)-2,3,4,5-tetrahydrodipicolinate + L-glutamate + H2O + H(+). It participates in amino-acid biosynthesis; L-lysine biosynthesis via DAP pathway; LL-2,6-diaminopimelate from (S)-tetrahydrodipicolinate (aminotransferase route): step 1/1. Functionally, involved in the synthesis of meso-diaminopimelate (m-DAP or DL-DAP), required for both lysine and peptidoglycan biosynthesis. Catalyzes the direct conversion of tetrahydrodipicolinate to LL-diaminopimelate. This chain is LL-diaminopimelate aminotransferase, found in Chlamydia pneumoniae (Chlamydophila pneumoniae).